A 167-amino-acid polypeptide reads, in one-letter code: Male-specific protein scotti (167 aa).

Residues Asn-30, Asn-124, and Asn-148 are each glycosylated (N-linked (GlcNAc...) asparagine).

It belongs to the male-specific scotti family.

In terms of biological role, post-meiotically transcribed gene that has a role in late spermiogenesis; required for actin cone progression during spermatid individualization. This is Male-specific protein scotti from Drosophila ananassae (Fruit fly).